A 370-amino-acid polypeptide reads, in one-letter code: 1-propanol dehydrogenase PduQ (370 aa).

It belongs to the iron-containing alcohol dehydrogenase family. In terms of assembly, interacts with PduP, probably via the N-terminus of PduQ. Requires Fe cation as cofactor.

It is found in the bacterial microcompartment. The catalysed reaction is 1-propanol + NAD(+) = propanal + NADH + H(+). It participates in polyol metabolism; 1,2-propanediol degradation. With respect to regulation, enzyme is oxygen sensitive. Functionally, an iron-dependent alcohol dehydrogenase required for optimal 1,2-propanediol (1,2-PD) degradation. NAD(+) and NADH are regenerated internally within the bacterial microcompartment (BMC) dedicated to 1,2-PD degradation by the PduP and PduQ enzymes, which reduce NAD(+) and oxidize NADH respectively, although there must also be cofactor transport across the BMC. In terms of biological role, the 1,2-PD-specific bacterial microcompartment (BMC) concentrates low levels of 1,2-PD catabolic enzymes, concentrates volatile reaction intermediates thus enhancing pathway flux and keeps the level of toxic, mutagenic propionaldehyde low. The protein is 1-propanol dehydrogenase PduQ of Salmonella typhimurium (strain LT2 / SGSC1412 / ATCC 700720).